The primary structure comprises 64 residues: UPF0370 protein YPA_2246 (64 aa).

A helical membrane pass occupies residues 3-23 (WLADYWWIILILLVGMILNGI). Positions 36-47 (DNKPELPPHRDN) are enriched in basic and acidic residues. The disordered stretch occupies residues 36-64 (DNKPELPPHRDNNAQWDDEDDWPDQNKKK).

This sequence belongs to the UPF0370 family.

It localises to the cell membrane. The polypeptide is UPF0370 protein YPA_2246 (Yersinia pestis bv. Antiqua (strain Antiqua)).